Here is a 197-residue protein sequence, read N- to C-terminus: Nucleoside triphosphate pyrophosphatase (197 aa).

Residue aspartate 72 is the Proton acceptor of the active site.

Belongs to the Maf family. A divalent metal cation serves as cofactor.

It localises to the cytoplasm. It catalyses the reaction a ribonucleoside 5'-triphosphate + H2O = a ribonucleoside 5'-phosphate + diphosphate + H(+). The enzyme catalyses a 2'-deoxyribonucleoside 5'-triphosphate + H2O = a 2'-deoxyribonucleoside 5'-phosphate + diphosphate + H(+). Nucleoside triphosphate pyrophosphatase. May have a dual role in cell division arrest and in preventing the incorporation of modified nucleotides into cellular nucleic acids. The protein is Nucleoside triphosphate pyrophosphatase of Corynebacterium glutamicum (strain ATCC 13032 / DSM 20300 / JCM 1318 / BCRC 11384 / CCUG 27702 / LMG 3730 / NBRC 12168 / NCIMB 10025 / NRRL B-2784 / 534).